Consider the following 473-residue polypeptide: ATP synthase subunit beta (473 aa).

153 to 160 (GGAGVGKT) contacts ATP.

Belongs to the ATPase alpha/beta chains family. In terms of assembly, F-type ATPases have 2 components, CF(1) - the catalytic core - and CF(0) - the membrane proton channel. CF(1) has five subunits: alpha(3), beta(3), gamma(1), delta(1), epsilon(1). CF(0) has three main subunits: a(1), b(2) and c(9-12). The alpha and beta chains form an alternating ring which encloses part of the gamma chain. CF(1) is attached to CF(0) by a central stalk formed by the gamma and epsilon chains, while a peripheral stalk is formed by the delta and b chains.

The protein localises to the cell inner membrane. The catalysed reaction is ATP + H2O + 4 H(+)(in) = ADP + phosphate + 5 H(+)(out). Produces ATP from ADP in the presence of a proton gradient across the membrane. The catalytic sites are hosted primarily by the beta subunits. This Rickettsia conorii (strain ATCC VR-613 / Malish 7) protein is ATP synthase subunit beta.